The sequence spans 151 residues: Globin CTT-IIIA (151 aa).

The 140-residue stretch at S8–D147 folds into the Globin domain. H98 is a heme b binding site.

The protein belongs to the globin family. In terms of assembly, monomer.

This Chironomus thummi thummi (Midge) protein is Globin CTT-IIIA.